Consider the following 267-residue polypeptide: 4-hydroxy-tetrahydrodipicolinate reductase (267 aa).

Residues 8 to 13 and glutamate 34 contribute to the NAD(+) site; that span reads GAAGRM. NADP(+) is bound at residue arginine 35. NAD(+) is bound by residues 98–100 and 122–125; these read GST and APNM. The active-site Proton donor/acceptor is the histidine 155. (S)-2,3,4,5-tetrahydrodipicolinate is bound at residue histidine 156. Lysine 159 functions as the Proton donor in the catalytic mechanism. 165 to 166 provides a ligand contact to (S)-2,3,4,5-tetrahydrodipicolinate; sequence GT.

Belongs to the DapB family.

The protein localises to the cytoplasm. It catalyses the reaction (S)-2,3,4,5-tetrahydrodipicolinate + NAD(+) + H2O = (2S,4S)-4-hydroxy-2,3,4,5-tetrahydrodipicolinate + NADH + H(+). The enzyme catalyses (S)-2,3,4,5-tetrahydrodipicolinate + NADP(+) + H2O = (2S,4S)-4-hydroxy-2,3,4,5-tetrahydrodipicolinate + NADPH + H(+). It participates in amino-acid biosynthesis; L-lysine biosynthesis via DAP pathway; (S)-tetrahydrodipicolinate from L-aspartate: step 4/4. In terms of biological role, catalyzes the conversion of 4-hydroxy-tetrahydrodipicolinate (HTPA) to tetrahydrodipicolinate. The sequence is that of 4-hydroxy-tetrahydrodipicolinate reductase from Geotalea uraniireducens (strain Rf4) (Geobacter uraniireducens).